The sequence spans 180 residues: ATP synthase subunit delta (180 aa).

Belongs to the ATPase delta chain family. As to quaternary structure, F-type ATPases have 2 components, F(1) - the catalytic core - and F(0) - the membrane proton channel. F(1) has five subunits: alpha(3), beta(3), gamma(1), delta(1), epsilon(1). F(0) has three main subunits: a(1), b(2) and c(10-14). The alpha and beta chains form an alternating ring which encloses part of the gamma chain. F(1) is attached to F(0) by a central stalk formed by the gamma and epsilon chains, while a peripheral stalk is formed by the delta and b chains.

The protein localises to the cell membrane. F(1)F(0) ATP synthase produces ATP from ADP in the presence of a proton or sodium gradient. F-type ATPases consist of two structural domains, F(1) containing the extramembraneous catalytic core and F(0) containing the membrane proton channel, linked together by a central stalk and a peripheral stalk. During catalysis, ATP synthesis in the catalytic domain of F(1) is coupled via a rotary mechanism of the central stalk subunits to proton translocation. In terms of biological role, this protein is part of the stalk that links CF(0) to CF(1). It either transmits conformational changes from CF(0) to CF(1) or is implicated in proton conduction. This is ATP synthase subunit delta from Dehalococcoides mccartyi (strain ATCC BAA-2100 / JCM 16839 / KCTC 5957 / BAV1).